We begin with the raw amino-acid sequence, 338 residues long: tRNA N6-adenosine threonylcarbamoyltransferase (338 aa).

Fe cation-binding residues include His111 and His115. Substrate is bound by residues Leu134 to Gly138, Asp167, Gly180, and Asn272. Residue Asp300 coordinates Fe cation.

It belongs to the KAE1 / TsaD family. Fe(2+) serves as cofactor.

The protein resides in the cytoplasm. It catalyses the reaction L-threonylcarbamoyladenylate + adenosine(37) in tRNA = N(6)-L-threonylcarbamoyladenosine(37) in tRNA + AMP + H(+). Functionally, required for the formation of a threonylcarbamoyl group on adenosine at position 37 (t(6)A37) in tRNAs that read codons beginning with adenine. Is involved in the transfer of the threonylcarbamoyl moiety of threonylcarbamoyl-AMP (TC-AMP) to the N6 group of A37, together with TsaE and TsaB. TsaD likely plays a direct catalytic role in this reaction. The polypeptide is tRNA N6-adenosine threonylcarbamoyltransferase (Vibrio atlanticus (strain LGP32) (Vibrio splendidus (strain Mel32))).